The sequence spans 241 residues: MLQKTVGIVLHTLNYNDTSNIVDIYTRENGRASFLVSVPRSRKSAVKTVLFQPLSMIEFEADYRPMSNLYRIKEAKSWYPFRTLPYDPYKSSIAMFLAEFLYRALREEAENGPLFAYLEHSIRWLDECDRSFSNFHLVFLMRFSRFLGLYPNTEDYREGCFFDMLNACFVSVRPLHGAFLKPEEASRINLLMRMNYETMHLFTMSRLERNRCLVIMNDYYRLHLPDFPVLKSLDVLKELFS.

Belongs to the RecO family.

In terms of biological role, involved in DNA repair and RecF pathway recombination. This Phocaeicola vulgatus (strain ATCC 8482 / DSM 1447 / JCM 5826 / CCUG 4940 / NBRC 14291 / NCTC 11154) (Bacteroides vulgatus) protein is DNA repair protein RecO.